A 187-amino-acid chain; its full sequence is uncharacterized protein (187 aa).

The Nudix hydrolase domain occupies 26-157 (NRHAAVLLPI…YLDVSRRGQQ (132 aa)). The Nudix box signature appears at 64–86 (GVADPKDKSIIATALREAEEEVN). Mg(2+) is bound by residues E80 and E84.

The protein belongs to the Nudix hydrolase family. PCD1 subfamily. It depends on Mn(2+) as a cofactor. The cofactor is Mg(2+).

In terms of biological role, probably mediates the hydrolysis of some nucleoside diphosphate derivatives. This is an uncharacterized protein from Photorhabdus laumondii subsp. laumondii (strain DSM 15139 / CIP 105565 / TT01) (Photorhabdus luminescens subsp. laumondii).